The following is a 545-amino-acid chain: Sphingomyelin phosphodiesterase 5 (545 aa).

The N-terminal 35 residues, 1-35, are a transit peptide targeting the mitochondrion; sequence MSLRESPFPNGFLEGLHAVGWGLIFPCFWFLDRLI. At 36-64 the chain is on the mitochondrial matrix side; it reads AVCISTTLERMWRLEQECYLHPLKVVFGS. A helical; Signal-anchor for type II membrane protein membrane pass occupies residues 65 to 85; sequence ILFFILFVISTPFALLGFILW. Over 86 to 545 the chain is Mitochondrial intermembrane; that stretch reads APLQAIRRPF…LSVSLDSEQN (460 aa). Glu258 serves as a coordination point for Mg(2+). The active-site Proton acceptor is the His529.

It belongs to the neutral sphingomyelinase family. It depends on Mg(2+) as a cofactor. The cofactor is Mn(2+).

Its subcellular location is the mitochondrion inner membrane. It localises to the endoplasmic reticulum membrane. The enzyme catalyses a sphingomyelin + H2O = phosphocholine + an N-acylsphing-4-enine + H(+). The catalysed reaction is N-(hexadecanoyl)-sphing-4-enine-1-phosphocholine + H2O = N-hexadecanoylsphing-4-enine + phosphocholine + H(+). It functions in the pathway lipid metabolism; sphingolipid metabolism. Its activity is regulated as follows. Activated by the phospholipids cardiolipin, phosphatidylserine, and phosphatidylethanolamine. Strongest activation with cardiolipin. Catalyzes the hydrolysis of membrane sphingomyelin to form phosphorylcholine and ceramide. In Danio rerio (Zebrafish), this protein is Sphingomyelin phosphodiesterase 5.